The primary structure comprises 64 residues: Large ribosomal subunit protein bL35 (64 aa).

Basic residues predominate over residues Met1 to Arg24. Residues Met1–Ala64 are disordered. Residues Glu25 to Lys35 show a composition bias toward basic and acidic residues. Over residues Lys36 to His45 the composition is skewed to basic residues.

The protein belongs to the bacterial ribosomal protein bL35 family.

The polypeptide is Large ribosomal subunit protein bL35 (Prosthecochloris aestuarii (strain DSM 271 / SK 413)).